We begin with the raw amino-acid sequence, 311 residues long: Aquaporin-1 (311 aa).

The Cytoplasmic portion of the chain corresponds to 1–16; that stretch reads MHPQVASLFDNVYEDL. The helical transmembrane segment at 17-37 threads the bilayer; it reads AAATLEFIGTAFFLLFGLGGI. Residues 38 to 56 are Extracellular-facing; that stretch reads QASTAEDTASSQPPASGIE. A helical membrane pass occupies residues 57-77; that stretch reads HVLYISTCMGFSLVVSAWLFF. A topological domain (cytoplasmic) is located at residue R78. The chain crosses the membrane as a helical span at residues 79–99; sequence VTGGLFNPNISFALLLVGGLK. Positions 85-87 match the NPA 1 motif; it reads NPN. A topological domain (extracellular) is located at residue P100. The chain crosses the membrane as a helical span at residues 101–121; that stretch reads LRFVLFCIAQLTGAIAGAAIV. Over 122-143 the chain is Cytoplasmic; sequence RGLTSAPLSVNNVLQQGTSAAQ. A helical transmembrane segment spans residues 144–164; it reads GVFIEMFITAALVLSVLMLAA. Topologically, residues 165–168 are extracellular; the sequence is EKHE. The helical transmembrane segment at 169–189 threads the bilayer; it reads ATPFAPVGIGLTLFACHLFAV. Topologically, residues 190–215 are cytoplasmic; that stretch reads YYTGAAMNSARAFGPAVISGFPEPQH. The short motif at 197–199 is the NPA 2 element; it reads NSA. Residues 216–236 form a helical membrane-spanning segment; the sequence is WVYWVGPFLGSLLGAGFYATL. The Extracellular portion of the chain corresponds to 237–311; that stretch reads KHYKYWRLNP…TSSRTNFSPV (75 aa). The interval 276–311 is disordered; it reads DEETRNGCASNEEGVRATGDEKSSNATSSRTNFSPV. Basic and acidic residues predominate over residues 288–298; the sequence is EGVRATGDEKS. Polar residues predominate over residues 299–311; it reads SNATSSRTNFSPV. N300 is a glycosylation site (N-linked (GlcNAc...) asparagine).

The protein belongs to the MIP/aquaporin (TC 1.A.8) family.

The protein localises to the cell membrane. It carries out the reaction H2O(in) = H2O(out). The catalysed reaction is H2O2(out) = H2O2(in). It catalyses the reaction nitric oxide(out) = nitric oxide(in). The enzyme catalyses CO2(out) = CO2(in). Its function is as follows. Water channel required to facilitate the transport of water across membranes. Also mediates the transport nitric oxide, hydrogen peroxide and carbon dioxide across the membrane. Required for Hartig net development in trembling aspen trees. Contributes in fungal cellular processes during the basidiocarp formation. The polypeptide is Aquaporin-1 (Laccaria bicolor (Bicoloured deceiver)).